The following is a 907-amino-acid chain: Whirlin (907 aa).

Positions 140–223 (LVSLRRAKAH…LVLSVYSAGR (84 aa)) constitute a PDZ 1 domain. A disordered region spans residues 243–264 (SISPPSGLPQPHGGALRQQEGD). A PDZ 2 domain is found at 279 to 361 (KVNLVLGDGR…LILTVKDVGR (83 aa)). 4 disordered regions span residues 502–540 (SMKA…TVSS), 565–663 (SVDD…SSKR), 684–717 (QSPP…QTGT), and 742–815 (PQTR…PTST). Residues 521–540 (SYSDTGSSTGSHGTSTTVSS) show a composition bias toward low complexity. Residues 609 to 626 (PPSSMPSCSGTVFSAPQN) are compositionally biased toward polar residues. The span at 628 to 642 (SPPAGTAPTPGTSSA) shows a compositional bias: low complexity. Residue Ser685 is modified to Phosphoserine. The span at 743–762 (QTRTASTLSQLSDSGQTLSE) shows a compositional bias: polar residues. Over residues 789-800 (SSKELPRNERPT) the composition is skewed to basic and acidic residues. The region spanning 816–899 (LVRVKKSAAT…TKDRDYIDFL (84 aa)) is the PDZ 3 domain.

In terms of assembly, forms homooligomers. Interacts (via C-terminal PDZ domain) with MYO15A; this interaction is necessary for localization of WHRN to stereocilia tips. Interacts (via C-terminal PDZ domain) with MPP1/p55. Interacts with LRRC4C/NGL1. Interacts with MYO7A. Interacts with RPGR. Interacts with EPS8. Interacts with CASK. Interacts with CIB2. Component of USH2 complex, composed of ADGRV1, PDZD7, USH2A and WHRN. Interacts (via PDZ domains) with PDZD7; the interaction is direct. Interacts (via N-terminal PDZ domain) with USH2A (via cytoplasmic region). Interacts with ADGRV1/MASS1 (via cytoplasmic region).

It is found in the cytoplasm. It localises to the cell projection. Its subcellular location is the stereocilium. The protein localises to the growth cone. The protein resides in the photoreceptor inner segment. It is found in the synapse. Involved in hearing and vision as member of the USH2 complex. Necessary for elongation and maintenance of inner and outer hair cell stereocilia in the organ of Corti in the inner ear. Involved in the maintenance of the hair bundle ankle region, which connects stereocilia in cochlear hair cells of the inner ear. In retina photoreceptors, required for the maintenance of periciliary membrane complex that seems to play a role in regulating intracellular protein transport. This chain is Whirlin, found in Homo sapiens (Human).